We begin with the raw amino-acid sequence, 284 residues long: 4-diphosphocytidyl-2-C-methyl-D-erythritol kinase (284 aa).

The active site involves K17. Residue 100-110 (PMGGGLGGGSS) participates in ATP binding. Residue D142 is part of the active site.

Belongs to the GHMP kinase family. IspE subfamily.

The catalysed reaction is 4-CDP-2-C-methyl-D-erythritol + ATP = 4-CDP-2-C-methyl-D-erythritol 2-phosphate + ADP + H(+). It participates in isoprenoid biosynthesis; isopentenyl diphosphate biosynthesis via DXP pathway; isopentenyl diphosphate from 1-deoxy-D-xylulose 5-phosphate: step 3/6. Its function is as follows. Catalyzes the phosphorylation of the position 2 hydroxy group of 4-diphosphocytidyl-2C-methyl-D-erythritol. This is 4-diphosphocytidyl-2-C-methyl-D-erythritol kinase from Aromatoleum aromaticum (strain DSM 19018 / LMG 30748 / EbN1) (Azoarcus sp. (strain EbN1)).